The chain runs to 151 residues: Deoxyuridine 5'-triphosphate nucleotidohydrolase (151 aa).

Residues 70 to 72 (RSG), N83, 87 to 89 (LID), and M97 contribute to the substrate site.

The protein belongs to the dUTPase family. The cofactor is Mg(2+).

The enzyme catalyses dUTP + H2O = dUMP + diphosphate + H(+). Its pathway is pyrimidine metabolism; dUMP biosynthesis; dUMP from dCTP (dUTP route): step 2/2. Its function is as follows. This enzyme is involved in nucleotide metabolism: it produces dUMP, the immediate precursor of thymidine nucleotides and it decreases the intracellular concentration of dUTP so that uracil cannot be incorporated into DNA. The sequence is that of Deoxyuridine 5'-triphosphate nucleotidohydrolase from Histophilus somni (strain 129Pt) (Haemophilus somnus).